Reading from the N-terminus, the 828-residue chain is G-type lectin S-receptor-like serine/threonine-protein kinase At2g19130 (828 aa).

An N-terminal signal peptide occupies residues 1–22 (MVSFLTLTSFFFICFFIHGSSA). Positions 23–146 (VDTISGDFTL…GSSLSANVLW (124 aa)) constitute a Bulb-type lectin domain. Topologically, residues 23–439 (VDTISGDFTL…GASGKSNNKG (417 aa)) are extracellular. Asparagine 85, asparagine 113, asparagine 203, asparagine 234, asparagine 240, and asparagine 255 each carry an N-linked (GlcNAc...) asparagine glycan. Positions 286–322 (PRQQCQVYRYCGSFGICSDKSEPFCRCPQGFRPMSQK) constitute an EGF-like domain. Disulfide bonds link cysteine 290/cysteine 302, cysteine 296/cysteine 310, cysteine 372/cysteine 394, and cysteine 376/cysteine 382. One can recognise a PAN domain in the interval 341–422 (CSRGDINQFF…EGNIFYLRLA (82 aa)). Residues 440-460 (LIFGAVLGSLGVIVLVLLVVI) traverse the membrane as a helical segment. Topologically, residues 461-828 (LILRYRRRKR…KKMTNDNSSA (368 aa)) are cytoplasmic. The 278-residue stretch at 493 to 770 (KNFSDKLGGG…QVVQILEGVL (278 aa)) folds into the Protein kinase domain. ATP-binding positions include 499 to 507 (LGGGGFGSV) and lysine 521. Serine 527 is modified (phosphoserine). A caM-binding region spans residues 582–600 (VEEKIVLGWKLRFQIALGT). Catalysis depends on aspartate 619, which acts as the Proton acceptor. Threonine 653 carries the phosphothreonine modification. Residues 796–828 (ESSSSSSHNSSQNHKHSSSSSSSKKMTNDNSSA) form a disordered region. Positions 797-828 (SSSSSSHNSSQNHKHSSSSSSSKKMTNDNSSA) are enriched in low complexity. Serine 815 is modified (phosphoserine).

It belongs to the protein kinase superfamily. Ser/Thr protein kinase family.

The protein localises to the cell membrane. The catalysed reaction is L-seryl-[protein] + ATP = O-phospho-L-seryl-[protein] + ADP + H(+). It carries out the reaction L-threonyl-[protein] + ATP = O-phospho-L-threonyl-[protein] + ADP + H(+). The chain is G-type lectin S-receptor-like serine/threonine-protein kinase At2g19130 from Arabidopsis thaliana (Mouse-ear cress).